The following is a 663-amino-acid chain: Protein KINESIN LIGHT CHAIN-RELATED 2 (663 aa).

A compositionally biased stretch (basic and acidic residues) spans 1–14; the sequence is MDVGESNERVKDDS. 2 disordered regions span residues 1 to 24 and 86 to 146; these read MDVGESNERVKDDSALQASPRSPL and GESK…KVSV. Phosphoserine is present on serine 19. The span at 86-100 shows a compositional bias: basic and acidic residues; it reads GESKKEIILEKKEES. The span at 102-111 shows a compositional bias: polar residues; sequence GEGSLSQKKP. TPR repeat units follow at residues 147-181, 200-233, 243-276, 285-318, 329-363, 369-402, 411-444, 454-487, 495-528, 537-570, and 579-612; these read DEESPELGVVLLKQARELVSSGENLNKALDLALRA, VMSLHILAAIYAGLGRYNDAVPVLERSIEIPMIE, FAGCMQLGDMYGLMGQVENSIMLYTAGLEIQRQV, GETCRYLAEAHVQAMQFEEASRLCQMALDIHKEN, AADRKLMGLICDAKGDYEVALEHYVLASMAMSSQN, AAVDCSIGDAYMSLARFDEAIFAYQKALAVFKQG, ALVYVRLADLYNKIGKTRDSKSYCENALKIYLKP, ATGFIEISAIYQSMNELDQALKLLRRALKIYANA, AGIEAQMGVVTYMMGNYSESYDIFKSAISKFRNS, GIALNQMGLACVQRYAINEAADLFEEAKTILEKE, and LAVYSNLAGTYDAMGRLDDAIEILEYVVGTREEK.

Belongs to the kinesin light chain family.

The protein is Protein KINESIN LIGHT CHAIN-RELATED 2 of Arabidopsis thaliana (Mouse-ear cress).